The sequence spans 277 residues: Type IV methyl-directed restriction enzyme EcoKMcrA (277 aa).

The HNH domain occupies 207–257 (CENCGKNAPFYLNDGNPYLEVHHVIPLSSGGADTTDNCVALCPNCHRELHY).

In terms of biological role, restriction of 5-methyl and 5-hydroxymethylcytosines at the specific DNA sequence 5'-C(me)CGG-3'. The sequence is that of Type IV methyl-directed restriction enzyme EcoKMcrA from Escherichia coli (strain K12).